Here is a 410-residue protein sequence, read N- to C-terminus: Translation initiation factor 2 subunit gamma (410 aa).

Residues 6–203 (QSEVNIGMVG…AIQEFIPTPK (198 aa)) form the tr-type G domain. Residues 15–22 (GHVDHGKT) form a G1 region. Asp18, Thr22, Gly43, and Ser45 together coordinate Mg(2+). Position 18–23 (18–23 (DHGKTS)) interacts with GTP. A G2 region spans residues 43–47 (GISIR). Zn(2+)-binding residues include Cys58, Cys61, Cys73, and Cys76. Residues 90 to 93 (DAPG) are G3. GTP-binding positions include 146–149 (NKID) and 181–183 (SAH). The interval 146–149 (NKID) is G4. Residues 181-183 (SAH) form a G5 region.

This sequence belongs to the TRAFAC class translation factor GTPase superfamily. Classic translation factor GTPase family. EIF2G subfamily. Heterotrimer composed of an alpha, a beta and a gamma chain. It depends on Mg(2+) as a cofactor.

The enzyme catalyses GTP + H2O = GDP + phosphate + H(+). Functionally, eIF-2 functions in the early steps of protein synthesis by forming a ternary complex with GTP and initiator tRNA. This Methanococcus maripaludis (strain C6 / ATCC BAA-1332) protein is Translation initiation factor 2 subunit gamma.